The following is a 129-amino-acid chain: Protein Turandot B1 (129 aa).

The first 21 residues, 1–21 (MNSATSLMCFALLLISPLCMG), serve as a signal peptide directing secretion.

It belongs to the Turandot family.

It is found in the secreted. Functionally, a humoral factor that may play a role in stress tolerance. The polypeptide is Protein Turandot B1 (TotB1) (Drosophila erecta (Fruit fly)).